The following is a 365-amino-acid chain: Galactoside alpha-(1,2)-fucosyltransferase 1 (365 aa).

The Cytoplasmic portion of the chain corresponds to 1-8 (MWPLSHRH). A helical; Signal-anchor for type II membrane protein transmembrane segment spans residues 9-25 (LCLAFLLVCVLSAISFF). Residues 26–365 (LHLYQDSIRH…LSPLWTLAEP (340 aa)) lie on the Lumenal side of the membrane. Asn-65, Asn-301, and Asn-327 each carry an N-linked (GlcNAc...) asparagine glycan.

It belongs to the glycosyltransferase 11 family.

The protein resides in the golgi apparatus. The protein localises to the golgi stack membrane. It catalyses the reaction a beta-D-galactosyl-(1-&gt;4)-N-acetyl-beta-D-glucosaminyl derivative + GDP-beta-L-fucose = an alpha-L-Fuc-(1-&gt;2)-beta-D-Gal-(1-&gt;4)-beta-D-GlcNAc derivative + GDP + H(+). The enzyme catalyses a ganglioside GA1 + GDP-beta-L-fucose = a ganglioside Fuc-GA1 + GDP + H(+). The catalysed reaction is a beta-D-Gal-(1-&gt;3)-beta-D-GlcNAc-(1-&gt;3)-beta-D-Gal-(1-&gt;4)-beta-D-Glc-(1&lt;-&gt;1')-Cer(d18:1(4E)) + GDP-beta-L-fucose = alpha-L-fucosyl-(1-&gt;2)- beta-D-galactosyl-(1-&gt;3)-N-acetyl-beta-D-glucosaminyl-(1-&gt;3)-beta-D-galactosyl-(1-&gt;4)-beta-D-glucosyl-(1&lt;-&gt;1')-N-acylsphing-4-enine + GDP + H(+). It carries out the reaction a neolactoside nLc4Cer(d18:1(4E)) + GDP-beta-L-fucose = a neolactoside IV(2)-alpha-Fuc-nLc4Cer(d18:1(4E)) + GDP + H(+). It catalyses the reaction a ganglioside GM1 + GDP-beta-L-fucose = a ganglioside Fuc-GM1 + GDP + H(+). The enzyme catalyses beta-D-galactosyl-(1-&gt;3)-N-acetyl-D-galactosamine + GDP-beta-L-fucose = alpha-L-fucosyl-(1-&gt;2)-beta-D-galactosyl-(1-&gt;3)-N-acetyl-D-galactosamine + GDP + H(+). It functions in the pathway protein modification; protein glycosylation. In terms of biological role, catalyzes the transfer of L-fucose, from a guanosine diphosphate-beta-L-fucose, to the terminal galactose residue of glycoconjugates through an alpha(1,2) linkage leading to H antigen synthesis that is an intermediate substrate in the synthesis of ABO blood group antigens. H antigen is essential for maturation of the glomerular layer of the main olfactory bulb, in cell migration and early cell-cell contacts during tumor associated angiogenesis. Preferentially fucosylates soluble lactose and to a lesser extent fucosylates glycolipids gangliosides GA1 and GM1a. This chain is Galactoside alpha-(1,2)-fucosyltransferase 1, found in Leontopithecus chrysomelas (Golden-headed lion tamarin).